Here is a 907-residue protein sequence, read N- to C-terminus: Leucine--tRNA ligase (907 aa).

Positions 42-52 match the 'HIGH' region motif; it reads PYPSGKLHMGH. A 'KMSKS' region motif is present at residues 651-655; sequence TMSKS. Position 654 (Lys-654) interacts with ATP.

The protein belongs to the class-I aminoacyl-tRNA synthetase family.

It localises to the cytoplasm. The enzyme catalyses tRNA(Leu) + L-leucine + ATP = L-leucyl-tRNA(Leu) + AMP + diphosphate. This Verminephrobacter eiseniae (strain EF01-2) protein is Leucine--tRNA ligase.